We begin with the raw amino-acid sequence, 175 residues long: Shikimate kinase (175 aa).

Residue 11 to 16 (GAGKTT) participates in ATP binding. Residue T15 coordinates Mg(2+). Substrate-binding residues include D33, R57, and G79. Position 118 (R118) interacts with ATP. Residue R140 participates in substrate binding.

It belongs to the shikimate kinase family. In terms of assembly, monomer. Mg(2+) is required as a cofactor.

It localises to the cytoplasm. The enzyme catalyses shikimate + ATP = 3-phosphoshikimate + ADP + H(+). The protein operates within metabolic intermediate biosynthesis; chorismate biosynthesis; chorismate from D-erythrose 4-phosphate and phosphoenolpyruvate: step 5/7. Its function is as follows. Catalyzes the specific phosphorylation of the 3-hydroxyl group of shikimic acid using ATP as a cosubstrate. This is Shikimate kinase from Phocaeicola vulgatus (strain ATCC 8482 / DSM 1447 / JCM 5826 / CCUG 4940 / NBRC 14291 / NCTC 11154) (Bacteroides vulgatus).